The primary structure comprises 157 residues: Protein Smg homolog (157 aa).

This sequence belongs to the Smg family.

This chain is Protein Smg homolog, found in Colwellia psychrerythraea (strain 34H / ATCC BAA-681) (Vibrio psychroerythus).